Here is a 160-residue protein sequence, read N- to C-terminus: Anaerobic nitrite reductase AHB1 (160 aa).

The Globin domain maps to 8 to 157; sequence VFTEEQEALV…LVAAIKAEMN (150 aa). The Homodimerization signature appears at 41–45; that stretch reads EIAPT. Residues Ser-51, Lys-65, His-69, Arg-99, Ser-103, and His-104 each coordinate heme b. Residues 111-123 carry the Homodimerization motif; the sequence is DEHFEVAKYALLE.

This sequence belongs to the plant globin family. As to quaternary structure, homodimer. Heme b serves as cofactor. Expressed in roots and rosette leaves.

The protein localises to the cytoplasm. The protein resides in the nucleus. The enzyme catalyses Fe(III)-heme b-[protein] + nitric oxide + H2O = Fe(II)-heme b-[protein] + nitrite + 2 H(+). Its function is as follows. Phytoglobin that reduces nitrite to nitric oxide (NO) under anoxic conditions (e.g. during flooding or in waterlogged soil). May not function as an oxygen storage or transport protein. Has an unusually high affinity for O(2) through an hexacoordinate heme iron because of a very low dissociation constant. This is Anaerobic nitrite reductase AHB1 from Arabidopsis thaliana (Mouse-ear cress).